Reading from the N-terminus, the 142-residue chain is Large ribosomal subunit protein uL13 (142 aa).

Belongs to the universal ribosomal protein uL13 family. As to quaternary structure, part of the 50S ribosomal subunit.

In terms of biological role, this protein is one of the early assembly proteins of the 50S ribosomal subunit, although it is not seen to bind rRNA by itself. It is important during the early stages of 50S assembly. This is Large ribosomal subunit protein uL13 from Aliivibrio salmonicida (strain LFI1238) (Vibrio salmonicida (strain LFI1238)).